A 302-amino-acid polypeptide reads, in one-letter code: Oxygen-dependent coproporphyrinogen-III oxidase (302 aa).

Residue Ser94 participates in substrate binding. The a divalent metal cation site is built by His98 and His108. His108 serves as the catalytic Proton donor. Asn110–Arg112 provides a ligand contact to substrate. A divalent metal cation contacts are provided by His147 and His177. The segment at Tyr242 to Gln277 is important for dimerization. Position 260-262 (Gly260–Arg262) interacts with substrate.

Belongs to the aerobic coproporphyrinogen-III oxidase family. In terms of assembly, homodimer. A divalent metal cation serves as cofactor.

The protein resides in the cytoplasm. The catalysed reaction is coproporphyrinogen III + O2 + 2 H(+) = protoporphyrinogen IX + 2 CO2 + 2 H2O. The protein operates within porphyrin-containing compound metabolism; protoporphyrin-IX biosynthesis; protoporphyrinogen-IX from coproporphyrinogen-III (O2 route): step 1/1. In terms of biological role, involved in the heme biosynthesis. Catalyzes the aerobic oxidative decarboxylation of propionate groups of rings A and B of coproporphyrinogen-III to yield the vinyl groups in protoporphyrinogen-IX. This chain is Oxygen-dependent coproporphyrinogen-III oxidase, found in Shewanella sp. (strain ANA-3).